The following is a 99-amino-acid chain: uncharacterized protein (99 aa).

A helical membrane pass occupies residues 74–90 (FLSLPLGHSYLFLFCFW).

It is found in the membrane. This is an uncharacterized protein from Saccharomyces cerevisiae (strain ATCC 204508 / S288c) (Baker's yeast).